The following is a 213-amino-acid chain: MSKISNDVLRESVSALVEGAKTKPRKFQETVELQIGLKNYDPQKDKRFSGSVRLPFVPRPRMRVRAGDVKHCEQAGAIGVDAKGVEDLKKLNKNKKLVKKLAQAYHAFLASDSVIKQIPRLLGPGLNKAGKFPAPINKNLEEMVLDTKCSIKFQLKKVLCMGVAVANVGMTEGEIRTNIMYAINFLVSLLKKNWQNVRCLYIKSTMGKPIRIY.

This sequence belongs to the universal ribosomal protein uL1 family.

The polypeptide is Large ribosomal subunit protein uL1 (RPL10A) (Chlamydomonas reinhardtii (Chlamydomonas smithii)).